The chain runs to 394 residues: Cytochrome b (394 aa).

The next 4 helical transmembrane spans lie at 39–59 (FGSLAGICLVIQIVTGVFLAM), 83–105 (WLLRYMHANGASMFFIVVYLHTF), 120–140 (VWCLGVVIFLLMIVTAFIGYV), and 186–206 (FFSLYHLLPFILVGASLLHLA). The heme b site is built by His-89 and His-103. Positions 191 and 204 each coordinate heme b. Residue His-209 coordinates a ubiquinone. 4 helical membrane passes run 232–252 (FYVKDLVGWVAFAIFFSIWIF), 296–316 (AGGVAAIALVFICLLALPFFK), 328–348 (IYQGIFWLLLADCLLLGWIGC), and 355–374 (FVTIGQISSIVFFLFFAITP).

Belongs to the cytochrome b family. In terms of assembly, the main subunits of complex b-c1 are: cytochrome b, cytochrome c1 and the Rieske protein. Heme b serves as cofactor.

The protein resides in the mitochondrion inner membrane. Component of the ubiquinol-cytochrome c reductase complex (complex III or cytochrome b-c1 complex) that is part of the mitochondrial respiratory chain. The b-c1 complex mediates electron transfer from ubiquinol to cytochrome c. Contributes to the generation of a proton gradient across the mitochondrial membrane that is then used for ATP synthesis. The protein is Cytochrome b (MT-CYB) of Oenothera berteroana (Bertero's evening primrose).